The primary structure comprises 190 residues: Holliday junction branch migration complex subunit RuvA (190 aa).

Residues 1–63 are domain I; that stretch reads MLDFIKGKVI…EESIEIYGFL (63 aa). Residues 64 to 139 are domain II; the sequence is ESSERDLFEE…ILPSLQYEKD (76 aa). A region of interest (flexible linker) is located at residue Asp139. The segment at 139 to 190 is domain III; that stretch reads DQKYDDILSALLNLGYKRLEAKEVLDKIYNNEKDEATIIRESLSILAGKDGK.

This sequence belongs to the RuvA family. In terms of assembly, homotetramer. Forms an RuvA(8)-RuvB(12)-Holliday junction (HJ) complex. HJ DNA is sandwiched between 2 RuvA tetramers; dsDNA enters through RuvA and exits via RuvB. An RuvB hexamer assembles on each DNA strand where it exits the tetramer. Each RuvB hexamer is contacted by two RuvA subunits (via domain III) on 2 adjacent RuvB subunits; this complex drives branch migration. In the full resolvosome a probable DNA-RuvA(4)-RuvB(12)-RuvC(2) complex forms which resolves the HJ.

It is found in the cytoplasm. In terms of biological role, the RuvA-RuvB-RuvC complex processes Holliday junction (HJ) DNA during genetic recombination and DNA repair, while the RuvA-RuvB complex plays an important role in the rescue of blocked DNA replication forks via replication fork reversal (RFR). RuvA specifically binds to HJ cruciform DNA, conferring on it an open structure. The RuvB hexamer acts as an ATP-dependent pump, pulling dsDNA into and through the RuvAB complex. HJ branch migration allows RuvC to scan DNA until it finds its consensus sequence, where it cleaves and resolves the cruciform DNA. This is Holliday junction branch migration complex subunit RuvA from Thermodesulfovibrio yellowstonii (strain ATCC 51303 / DSM 11347 / YP87).